Consider the following 103-residue polypeptide: Large ribosomal subunit protein bL21 (103 aa).

It belongs to the bacterial ribosomal protein bL21 family. Part of the 50S ribosomal subunit. Contacts protein L20.

In terms of biological role, this protein binds to 23S rRNA in the presence of protein L20. In Acidovorax sp. (strain JS42), this protein is Large ribosomal subunit protein bL21.